Consider the following 207-residue polypeptide: Nucleoplasmin-2 (207 aa).

Positions 1–15 (MSRHSTSSVTETTAK) are enriched in polar residues. Disordered stretches follow at residues 1-20 (MSRH…MLWG) and 121-207 (DLTW…VTKK). The span at 123-147 (TWEDDEEEEEEEEEEDEDEDADISL) shows a compositional bias: acidic residues. Positions 129-152 (EEEEEEEEEDEDEDADISLEEIPV) are acidic tract A2. The short motif at 165 to 180 (SIAKKKKVEKEEDETV) is the Bipartite nuclear localization signal element. Positions 198-207 (PRAKKPVTKK) are enriched in basic residues.

This sequence belongs to the nucleoplasmin family. As to quaternary structure, homopentamer, when bound to H2A-H2B dimers only. Homodecamer of two stacked pentamers, when bound to H2A-H2B dimers and H3-H4 tetramers simultaneously. Ovary specific.

Its subcellular location is the nucleus. Its function is as follows. Core histones chaperone involved in chromatin reprogramming, specially during fertilization and early embryonic development. Probably involved in sperm DNA decondensation during fertilization. The protein is Nucleoplasmin-2 (Npm2) of Mus musculus (Mouse).